The primary structure comprises 208 residues: N-(5'-phosphoribosyl)anthranilate isomerase (208 aa).

Belongs to the TrpF family.

It carries out the reaction N-(5-phospho-beta-D-ribosyl)anthranilate = 1-(2-carboxyphenylamino)-1-deoxy-D-ribulose 5-phosphate. It participates in amino-acid biosynthesis; L-tryptophan biosynthesis; L-tryptophan from chorismate: step 3/5. This is N-(5'-phosphoribosyl)anthranilate isomerase from Methanothrix thermoacetophila (strain DSM 6194 / JCM 14653 / NBRC 101360 / PT) (Methanosaeta thermophila).